Reading from the N-terminus, the 296-residue chain is MSDKLRQIAFYGKGGIGKSTTSQNTLAALTEMGQKILIVGCDPKADSTRLILHSKAQDTVLSLAAEAGSVEDLEIEDVMKVGYRDIRCVESGGPEPGVGCAGRGVITSINFLEENGAYDGVDYVSYDVLGDVVCGGFAMPIRENKAQEIYIVMSGEMMAMYAANNISKGILKYANSGGVRLGGLVCNERQTDKELELAEALAGKLGTKLIHFVPRDNIVQHAELRRMTVLEYAPESKQAEEYRQLAQKIHANGGNGTIPTPITMDELEEMLMEFGIMSAVDESVIGKSAAELAAAV.

12–19 (GKGGIGKS) provides a ligand contact to ATP. C100 serves as a coordination point for [4Fe-4S] cluster. R103 bears the ADP-ribosylarginine; by dinitrogenase reductase ADP-ribosyltransferase mark. Residue C134 participates in [4Fe-4S] cluster binding.

Belongs to the NifH/BchL/ChlL family. In terms of assembly, homodimer. [4Fe-4S] cluster serves as cofactor. The reversible ADP-ribosylation of Arg-103 inactivates the nitrogenase reductase and regulates nitrogenase activity.

The enzyme catalyses N2 + 8 reduced [2Fe-2S]-[ferredoxin] + 16 ATP + 16 H2O = H2 + 8 oxidized [2Fe-2S]-[ferredoxin] + 2 NH4(+) + 16 ADP + 16 phosphate + 6 H(+). Its function is as follows. The key enzymatic reactions in nitrogen fixation are catalyzed by the nitrogenase complex, which has 2 components: the iron protein and the molybdenum-iron protein. The sequence is that of Nitrogenase iron protein from Acidithiobacillus ferrooxidans (strain ATCC 23270 / DSM 14882 / CIP 104768 / NCIMB 8455) (Ferrobacillus ferrooxidans (strain ATCC 23270)).